Reading from the N-terminus, the 1669-residue chain is Collagen alpha-1(IV) chain (1669 aa).

The N-terminal stretch at 1-27 is a signal peptide; that stretch reads MGPRLGVWLLLLLAALLLHEESSRAAA. Residues 28–172 constitute a propeptide, N-terminal propeptide (7S domain); that stretch reads KGGCAGSGCG…LGHIPGTLLK (145 aa). The tract at residues 50-1445 is disordered; that stretch reads ERGLPGLQGV…PPGTPSVDHG (1396 aa). Positions 173–1440 are triple-helical region; sequence GERGYPGQPG…PGSMGPPGTP (1268 aa). The segment covering 196 to 214 has biased composition (pro residues); that stretch reads VGPPGFTGPPGPPGPPGPP. 3-hydroxyproline occurs at positions 204, 207, and 210. 2 stretches are compositionally biased toward basic and acidic residues: residues 254–263 and 289–298; these read TAMRGEKGQK and PGKDGEKGEK. Residues 347–356 are compositionally biased toward gly residues; the sequence is GYPGGPGAKG. The segment covering 357–366 has biased composition (low complexity); sequence ETGPKGFPGI. The segment covering 367–376 has biased composition (pro residues); that stretch reads PGQPGPPGFP. Positions 396-412 are enriched in low complexity; the sequence is PGLPGVSLPGPSGRDGL. Pro residues-rich tracts occupy residues 413–424 and 436–448; these read PGPPGPPGPPGQ and PGPP…PGIP. Low complexity predominate over residues 485–494; that stretch reads PGEIGFPGQP. Basic and acidic residues-rich tracts occupy residues 497–508 and 535–545; these read KGDRGLPGRDGL and FDIRLKGDKGD. Gly residues predominate over residues 586 to 595; it reads GPPGGVGFPG. A 3-hydroxyproline mark is found at proline 587 and proline 602. The residue at position 603 (proline 603) is a 4-hydroxyproline. Residue proline 605 is modified to 3-hydroxyproline. Residues proline 606, proline 623, proline 626, proline 629, and proline 632 each carry the 4-hydroxyproline modification. The residue at position 647 (proline 647) is a 3-hydroxyproline. Composition is skewed to gly residues over residues 758–767 and 797–817; these read GNVGGPGIPG and GVPG…GPPG. Positions 847-871 are enriched in low complexity; the sequence is SQGLPGLTGQSGLPGLPGQQGTPGQ. Residues 937–955 show a composition bias toward basic and acidic residues; that stretch reads SMDKVDMGSMKGEKGDQGE. Gly residues predominate over residues 1011–1020; the sequence is GSAGGMGLPG. Composition is skewed to low complexity over residues 1030–1040, 1101–1114, and 1193–1212; these read IPGPQGIPGLP, SPGS…PGLP, and FPGL…QGFM. Proline 1214 carries the post-translational modification 3-hydroxyproline. Positions 1247 to 1258 are enriched in pro residues; sequence PGRPGPMGPPGL. Gly residues predominate over residues 1290–1299; the sequence is GMPGIGGSPG. Residues 1413 to 1428 show a composition bias toward pro residues; sequence FGPPGPRGFPGPPGPD. 3-hydroxyproline is present on proline 1424. The 225-residue stretch at 1445–1669 folds into the Collagen IV NC1 domain; the sequence is GFLVTRHSQT…SRCQVCMRRT (225 aa). 6 disulfide bridges follow: cysteine 1460-cysteine 1551, cysteine 1493-cysteine 1548, cysteine 1505-cysteine 1511, cysteine 1570-cysteine 1665, cysteine 1604-cysteine 1662, and cysteine 1616-cysteine 1622. Residue methionine 1533 forms an S-Lysyl-methionine sulfilimine (Met-Lys) (interchain with K-1651) linkage. Lysine 1651 participates in a covalent cross-link: S-Lysyl-methionine sulfilimine (Lys-Met) (interchain with M-1533).

It belongs to the type IV collagen family. As to quaternary structure, there are six type IV collagen isoforms, alpha 1(IV)-alpha 6(IV), each of which can form a triple helix structure with 2 other chains to generate type IV collagen network. Interacts with EFEMP2. Lysines at the third position of the tripeptide repeating unit (G-X-Y) are hydroxylated in all cases. The modified lysines can be O-glycosylated. In terms of processing, contains 4-hydroxyproline. Prolines at the third position of the tripeptide repeating unit (G-X-Y) are hydroxylated in some or all of the chains. Post-translationally, contains 3-hydroxyproline. This modification occurs on the first proline residue in the sequence motif Gly-Pro-Hyp, where Hyp is 4-hydroxyproline. Type IV collagens contain numerous cysteine residues which are involved in inter- and intramolecular disulfide bonding. 12 of these, located in the NC1 domain, are conserved in all known type IV collagens. In terms of processing, the trimeric structure of the NC1 domains is stabilized by covalent bonds (sulfilimine cross-links) between Lys and Met residues. These cross-links are important for the mechanical stability of the basement membrane. Sulfilimine cross-link is catalyzed by PXDN. Post-translationally, proteolytic processing produces the C-terminal NC1 peptide, arresten.

It is found in the secreted. It localises to the extracellular space. The protein resides in the extracellular matrix. Its subcellular location is the basement membrane. Its function is as follows. Type IV collagen is the major structural component of glomerular basement membranes (GBM), forming a 'chicken-wire' meshwork together with laminins, proteoglycans and entactin/nidogen. Functionally, arresten, comprising the C-terminal NC1 domain, inhibits angiogenesis and tumor formation. The C-terminal half is found to possess the anti-angiogenic activity. Specifically inhibits endothelial cell proliferation, migration and tube formation. This Bos taurus (Bovine) protein is Collagen alpha-1(IV) chain.